Here is a 504-residue protein sequence, read N- to C-terminus: Lysine--tRNA ligase (504 aa).

2 residues coordinate Mg(2+): Glu411 and Glu418.

Belongs to the class-II aminoacyl-tRNA synthetase family. In terms of assembly, homodimer. Mg(2+) serves as cofactor.

The protein localises to the cytoplasm. The catalysed reaction is tRNA(Lys) + L-lysine + ATP = L-lysyl-tRNA(Lys) + AMP + diphosphate. The polypeptide is Lysine--tRNA ligase (Clostridium botulinum (strain ATCC 19397 / Type A)).